A 574-amino-acid chain; its full sequence is Ankyrin repeat protein B19 (574 aa).

ANK repeat units lie at residues 56–87 (TGYT…DVTM), 135–164 (IKSR…DPNF), 167–213 (DGYT…NLNA), 217–249 (CGNT…NFEI), 253–285 (HGLT…NVGE), and 327–356 (EGKT…DINA). Positions 541–574 (NCLLTLLPSEIIYEILYMLTINDLYNISYPPTKV) constitute an F-box domain.

This sequence belongs to the poxvirinae B18 protein family.

The polypeptide is Ankyrin repeat protein B19 (Vaccinia virus (strain Western Reserve) (VACV)).